The primary structure comprises 274 residues: Large ribosomal subunit protein uL2cz/uL2cy (274 aa).

A disordered region spans residues 225 to 274; sequence NPVDHPHGGGEGRAPIGRKKPTTPWGYPALGRRSRKRKKYSDSFILRRRK.

It belongs to the universal ribosomal protein uL2 family. In terms of assembly, part of the 50S ribosomal subunit.

The protein resides in the plastid. It is found in the chloroplast. This is Large ribosomal subunit protein uL2cz/uL2cy (rpl2-A) from Dioscorea elephantipes (Elephant's foot yam).